We begin with the raw amino-acid sequence, 918 residues long: MSRFFKGGSSDSDAESVDSSEENRLTSSRLKKQDDSSSEEESSEEESASSSESESSEEESESEESEVEVPKKKAVAASEDSESDSESSEEEEETESEEDSEVSDESESESESESESEEESESEEESDESERSGPSSFLKKPEKEEAKPAGLKFLRGESSEESSDEEEGRRVVKSAKDKRYEEFISCMETIKNAMSSNNWIVVSNEFDHLNKVSQKCKEAGRNPPPYIEFLSALDQKLESADKAFIKSLDAANGRAFNALKQRVRKNNRQFQSDIDRYRKDPEGFMKPAELNEIPKPAGKAGQDEVIVDGVATRGIVAPTEGLGKPEEITPADIFKYLRAIFEARGKKSTDRSEQIRLLEKLSTIAVTDYQRLRVKVALLAVRFDINTGSGQYMPIDQWNAALTELHSILDIFDANPKIVIVEQVEDENEEEEEAIAAAENNNGVIQVQGSVVSFLERLDDEFTRSLQMIDPHTPEYIDRLKDETSLYTLLVRSQGYLERIGVVENTARLIMRRLDRVYYKPEQVIRANEEVAWRSFPPTFDLTITPRATTTTPDILIHSLCVYLYNNGVSLLRTRAMLCHIYHEALQNRFYKARDMLLMSHLQDSVHAADIATQILHNRTMVQIGLCAFRNGMVQETQYALQDISTTGRVKELLGQGIQAPKFGQFTPDQDRLDKQLVLPFHMHINLELLECVYLTCSMLMEIPAMAAASSTASDSRKRVISRPFRRMLEYIDRQLFVGPPENTREYIMQASKALADGEWRRCEEFIHAIKIWSLMPDADKIKQMLSEKIREEGLRTYLLAYAAFYDSVSLEFLATTFDLPVQRVTVIVSRLLSKREIHAALDQVHGAIIFERVEINKLESLTVSLSEKTAQLNEANEKLYEQKTQHTNPQENRRRDKGGSVKRRNERTENRNRSDMN.

Residues 1–174 are disordered; sequence MSRFFKGGSS…EEEGRRVVKS (174 aa). Phosphoserine occurs at positions 10, 12, 16, 19, and 20. 3 stretches are compositionally biased toward acidic residues: residues 36-47, 54-67, and 79-128; these read SSSEEESSEEES, ESSE…ESEV, and EDSE…ESDE. Thr667 carries the post-translational modification Phosphothreonine. The PCI domain occupies 681 to 856; sequence FHMHINLELL…GAIIFERVEI (176 aa). Residues 879–918 are disordered; sequence KLYEQKTQHTNPQENRRRDKGGSVKRRNERTENRNRSDMN. The segment covering 907 to 918 has biased composition (basic and acidic residues); that stretch reads ERTENRNRSDMN.

The protein belongs to the eIF-3 subunit C family. Component of the eukaryotic translation initiation factor 3 (eIF-3) complex. The eIF-3 complex appears to include tif32/eif3a, SPAC25G10.08/eif3b, tif33/eif3c, SPBC4C3.07/eif3f, tif35/eif3g and sum1/eif3i. This set of common subunits may also associate exclusively with either moe1/eif3d and int6/eif3e, or with SPAC821.05/eif3h and SPAC1751.03/eif3m. The eIF-3 complex may also include SPAC3A12.13c/eif3j.

Its subcellular location is the cytoplasm. Functionally, component of the eukaryotic translation initiation factor 3 (eIF-3) complex, which is involved in protein synthesis of a specialized repertoire of mRNAs and, together with other initiation factors, stimulates binding of mRNA and methionyl-tRNAi to the 40S ribosome. The eIF-3 complex specifically targets and initiates translation of a subset of mRNAs involved in cell proliferation. The polypeptide is Eukaryotic translation initiation factor 3 subunit C (nip1) (Schizosaccharomyces pombe (strain 972 / ATCC 24843) (Fission yeast)).